A 722-amino-acid chain; its full sequence is Polyribonucleotide nucleotidyltransferase (722 aa).

2 residues coordinate Mg(2+): aspartate 495 and aspartate 501. Residues 562 to 621 (PRLLSFRIDPELIGTVIGPGGRTIKGITERTNTKIDIEDGGIVTIASHDGVAAEEAQKII) form the KH domain. Residues 631–699 (GEVFTGSITR…NRGRINLTLR (69 aa)) enclose the S1 motif domain.

Belongs to the polyribonucleotide nucleotidyltransferase family. Mg(2+) is required as a cofactor.

It localises to the cytoplasm. It carries out the reaction RNA(n+1) + phosphate = RNA(n) + a ribonucleoside 5'-diphosphate. In terms of biological role, involved in mRNA degradation. Catalyzes the phosphorolysis of single-stranded polyribonucleotides processively in the 3'- to 5'-direction. This is Polyribonucleotide nucleotidyltransferase from Prochlorococcus marinus (strain SARG / CCMP1375 / SS120).